The following is a 345-amino-acid chain: Pyruvate dehydrogenase E1 component subunit alpha (345 aa).

Heterodimer of an alpha and a beta chain. Requires thiamine diphosphate as cofactor.

It catalyses the reaction N(6)-[(R)-lipoyl]-L-lysyl-[protein] + pyruvate + H(+) = N(6)-[(R)-S(8)-acetyldihydrolipoyl]-L-lysyl-[protein] + CO2. The pyruvate dehydrogenase complex catalyzes the overall conversion of pyruvate to acetyl-CoA and CO(2). It contains multiple copies of three enzymatic components: pyruvate dehydrogenase (E1), dihydrolipoamide acetyltransferase (E2) and lipoamide dehydrogenase (E3). This Acholeplasma laidlawii protein is Pyruvate dehydrogenase E1 component subunit alpha (pdhA).